Here is a 248-residue protein sequence, read N- to C-terminus: Anamorsin homolog (248 aa).

The tract at residues 4–129 is N-terminal SAM-like domain; it reads FKGLQKSLYI…ETGSSARLSF (126 aa). Residues 130 to 161 form a linker region; the sequence is AKKNANAANVWKISGDDEELIDEEELLDEEDK. [2Fe-2S] cluster-binding residues include Cys-172, Cys-181, Cys-184, and Cys-186. Positions 172-186 are fe-S binding site A; that stretch reads CSTTGKRKACKNCSC. Residues Cys-209, Cys-212, Cys-220, and Cys-223 each contribute to the [4Fe-4S] cluster site. Short sequence motifs (cx2C motif) lie at residues 209–212 and 220–223; these read CGNC and CSTC. A fe-S binding site B region spans residues 209 to 223; that stretch reads CGNCYLGDAFRCSTC.

Belongs to the anamorsin family. As to quaternary structure, monomer. [2Fe-2S] cluster serves as cofactor. The cofactor is [4Fe-4S] cluster.

It is found in the cytoplasm. The protein resides in the mitochondrion intermembrane space. Component of the cytosolic iron-sulfur (Fe-S) protein assembly (CIA) machinery. Required for the maturation of extramitochondrial Fe-S proteins. Part of an electron transfer chain functioning in an early step of cytosolic Fe-S biogenesis, facilitating the de novo assembly of a [4Fe-4S] cluster on the cytosolic Fe-S scaffold complex. Electrons are transferred from NADPH via a FAD- and FMN-containing diflavin oxidoreductase. Together with the diflavin oxidoreductase, also required for the assembly of the diferric tyrosyl radical cofactor of ribonucleotide reductase (RNR), probably by providing electrons for reduction during radical cofactor maturation in the catalytic small subunit. The chain is Anamorsin homolog from Drosophila sechellia (Fruit fly).